The primary structure comprises 310 residues: Glycine--tRNA ligase alpha subunit (310 aa).

The protein belongs to the class-II aminoacyl-tRNA synthetase family. Tetramer of two alpha and two beta subunits.

It is found in the cytoplasm. The enzyme catalyses tRNA(Gly) + glycine + ATP = glycyl-tRNA(Gly) + AMP + diphosphate. The polypeptide is Glycine--tRNA ligase alpha subunit (Agrobacterium fabrum (strain C58 / ATCC 33970) (Agrobacterium tumefaciens (strain C58))).